The sequence spans 65 residues: Weak neurotoxin 7 (65 aa).

Intrachain disulfides connect Cys3-Cys24, Cys6-Cys11, Cys17-Cys42, Cys46-Cys57, and Cys58-Cys63.

It belongs to the three-finger toxin family. Ancestral subfamily. Orphan group II sub-subfamily. Expressed by the venom gland.

The protein localises to the secreted. Functionally, binds with low affinity to muscular (alpha-1-beta-1-delta-epsilon/CHRNA1-CHRNB1-CHRND-CHRNE) and very low affinity to neuronal (alpha-7/CHRNA7) nicotinic acetylcholine receptor (nAChR). This Naja naja (Indian cobra) protein is Weak neurotoxin 7.